The sequence spans 233 residues: UPF0173 metal-dependent hydrolase Igni_1254 (233 aa).

This sequence belongs to the UPF0173 family.

This chain is UPF0173 metal-dependent hydrolase Igni_1254, found in Ignicoccus hospitalis (strain KIN4/I / DSM 18386 / JCM 14125).